The following is a 934-amino-acid chain: Bifunctional uridylyltransferase/uridylyl-removing enzyme (934 aa).

Positions 1 to 379 are uridylyltransferase; it reads MSAHDLKLEE…TFSRRKRKLS (379 aa). The uridylyl-removing stretch occupies residues 380–736; it reads DDGAFISENH…AKPHAFEAVT (357 aa). The region spanning 496–613 is the HD domain; it reads VDEHLLRCIA…IDFADTVQTM (118 aa). 2 consecutive ACT domains span residues 737-818 and 848-931; these read EITV…DMLA and VIEV…RSPQ.

The protein belongs to the GlnD family. The cofactor is Mg(2+).

The catalysed reaction is [protein-PII]-L-tyrosine + UTP = [protein-PII]-uridylyl-L-tyrosine + diphosphate. It carries out the reaction [protein-PII]-uridylyl-L-tyrosine + H2O = [protein-PII]-L-tyrosine + UMP + H(+). Its activity is regulated as follows. Uridylyltransferase (UTase) activity is inhibited by glutamine, while glutamine activates uridylyl-removing (UR) activity. In terms of biological role, modifies, by uridylylation and deuridylylation, the PII regulatory proteins (GlnB and homologs), in response to the nitrogen status of the cell that GlnD senses through the glutamine level. Under low glutamine levels, catalyzes the conversion of the PII proteins and UTP to PII-UMP and PPi, while under higher glutamine levels, GlnD hydrolyzes PII-UMP to PII and UMP (deuridylylation). Thus, controls uridylylation state and activity of the PII proteins, and plays an important role in the regulation of nitrogen assimilation and metabolism. The polypeptide is Bifunctional uridylyltransferase/uridylyl-removing enzyme (Brucella suis biovar 1 (strain 1330)).